The following is a 1487-amino-acid chain: Major viral transcription factor (1487 aa).

Disordered stretches follow at residues 41 to 295 (AAPD…LPPG), 310 to 371 (LAKT…EEAP), 409 to 442 (REPL…SRDG), and 803 to 1007 (PPTR…HTPR). Residues 66-75 (VIPPPSPAPE) are compositionally biased toward pro residues. Low complexity-rich tracts occupy residues 165 to 193 (PSSA…SSSS) and 201 to 213 (DGAG…SSSS). Acidic residues predominate over residues 214–224 (DDSDSDEGGEE). The segment covering 235 to 272 (AAKTPSAAGSPGPSSGGDRPAAGAATPKSCRSGAASPG) has biased composition (low complexity). Positions 273 to 285 (APAPAPASAPAPS) are enriched in pro residues. 3 stretches are compositionally biased toward low complexity: residues 807–829 (SQQP…AEGS), 849–860 (PSSHSQSPQHSQ), and 867–877 (ATTATCCRATQ). Over residues 878–893 (TNARSRGQQHQPQKAR) the composition is skewed to polar residues. A compositionally biased stretch (basic residues) spans 920–929 (HGRPRGKSGK). Positions 938–951 (AAQAGASASFSSSA) are enriched in low complexity. A compositionally biased stretch (basic and acidic residues) spans 988–1007 (GPDRRGGFRRVPRGDCHTPR).

It belongs to the herpesviridae ICP4 family. A long stretch of serine residues may be a major site of phosphorylation.

It localises to the host nucleus. Functionally, this IE protein is a multifunctional protein capable of migrating to the nucleus, binding to DNA, trans-activating other viral genes, and autoregulating its own synthesis. This chain is Major viral transcription factor (IE), found in Equine herpesvirus 1 (strain Kentucky A) (EHV-1).